A 734-amino-acid polypeptide reads, in one-letter code: Photosystem I P700 chlorophyll a apoprotein A2 (734 aa).

8 helical membrane passes run Ile46–Ala69, Leu135–Gln158, Leu175–Ile199, Ile273–Tyr291, Ile330–Tyr353, Ala369–Ile395, Ala417–His439, and Phe517–Val535. 2 residues coordinate [4Fe-4S] cluster: Cys559 and Cys568. Helical transmembrane passes span Ala575 to Trp596 and Leu643 to Ile665. The chlorophyll a site is built by His654, Met662, and Tyr670. Trp671 contacts phylloquinone. The chain crosses the membrane as a helical span at residues Leu707–Ala727.

The protein belongs to the PsaA/PsaB family. In terms of assembly, the PsaA/B heterodimer binds the P700 chlorophyll special pair and subsequent electron acceptors. PSI consists of a core antenna complex that captures photons, and an electron transfer chain that converts photonic excitation into a charge separation. The eukaryotic PSI reaction center is composed of at least 11 subunits. P700 is a chlorophyll a/chlorophyll a' dimer, A0 is one or more chlorophyll a, A1 is one or both phylloquinones and FX is a shared 4Fe-4S iron-sulfur center. serves as cofactor.

The protein resides in the plastid. The protein localises to the chloroplast thylakoid membrane. The catalysed reaction is reduced [plastocyanin] + hnu + oxidized [2Fe-2S]-[ferredoxin] = oxidized [plastocyanin] + reduced [2Fe-2S]-[ferredoxin]. In terms of biological role, psaA and PsaB bind P700, the primary electron donor of photosystem I (PSI), as well as the electron acceptors A0, A1 and FX. PSI is a plastocyanin-ferredoxin oxidoreductase, converting photonic excitation into a charge separation, which transfers an electron from the donor P700 chlorophyll pair to the spectroscopically characterized acceptors A0, A1, FX, FA and FB in turn. Oxidized P700 is reduced on the lumenal side of the thylakoid membrane by plastocyanin. This is Photosystem I P700 chlorophyll a apoprotein A2 from Oryza sativa (Rice).